The sequence spans 349 residues: Phenylalanine--tRNA ligase alpha subunit (349 aa).

Mg(2+) is bound at residue Glu-264.

Belongs to the class-II aminoacyl-tRNA synthetase family. Phe-tRNA synthetase alpha subunit type 1 subfamily. As to quaternary structure, tetramer of two alpha and two beta subunits. It depends on Mg(2+) as a cofactor.

Its subcellular location is the cytoplasm. The enzyme catalyses tRNA(Phe) + L-phenylalanine + ATP = L-phenylalanyl-tRNA(Phe) + AMP + diphosphate + H(+). The polypeptide is Phenylalanine--tRNA ligase alpha subunit (Myxococcus xanthus (strain DK1622)).